A 291-amino-acid chain; its full sequence is Ribosome maturation factor RimP (291 aa).

The disordered stretch occupies residues 188–291; it reads ERGLGEDEEF…GGKPKAKETH (104 aa). Residues 193–211 are compositionally biased toward acidic residues; that stretch reads EDEEFEDDADEVFEGDEAD. Basic and acidic residues-rich tracts occupy residues 212–237 and 245–254; these read EKAA…EKRA and AKSEKAEKSQ.

Belongs to the RimP family.

It localises to the cytoplasm. In terms of biological role, required for maturation of 30S ribosomal subunits. In Azorhizobium caulinodans (strain ATCC 43989 / DSM 5975 / JCM 20966 / LMG 6465 / NBRC 14845 / NCIMB 13405 / ORS 571), this protein is Ribosome maturation factor RimP.